Consider the following 310-residue polypeptide: Protein LRATD2 (310 aa).

Residues 1 to 76 (MGNQVEKLTH…PPPQPQPYDP (76 aa)) form a disordered region. Over residues 54 to 64 (PDGGGLPDGGD) the composition is skewed to gly residues. Residues 65-74 (GPPPPQPQPY) show a composition bias toward pro residues. An LRAT domain is found at 122–217 (VEFVSQAQYP…CRYGKREFKI (96 aa)). The tract at residues 274–310 (HPAEPEEGDSNVARTTPPPGRPPAPSSEEEDGEAVAH) is disordered. Residues 289 to 298 (TPPPGRPPAP) are compositionally biased toward pro residues. The span at 300–310 (SEEEDGEAVAH) shows a compositional bias: acidic residues.

It belongs to the LRATD family. In terms of tissue distribution, expressed in esophageal squamous cell carcinomas.

The chain is Protein LRATD2 from Homo sapiens (Human).